We begin with the raw amino-acid sequence, 295 residues long: N-acetylmuramic acid 6-phosphate etherase (295 aa).

The SIS domain occupies 53–216 (TTEQFKQGGR…STITMVGVGK (164 aa)). E81 (proton donor) is an active-site residue. Residue E112 is part of the active site.

It belongs to the GCKR-like family. MurNAc-6-P etherase subfamily. As to quaternary structure, homodimer.

The enzyme catalyses N-acetyl-D-muramate 6-phosphate + H2O = N-acetyl-D-glucosamine 6-phosphate + (R)-lactate. Its pathway is amino-sugar metabolism; N-acetylmuramate degradation. Functionally, specifically catalyzes the cleavage of the D-lactyl ether substituent of MurNAc 6-phosphate, producing GlcNAc 6-phosphate and D-lactate. In Staphylococcus saprophyticus subsp. saprophyticus (strain ATCC 15305 / DSM 20229 / NCIMB 8711 / NCTC 7292 / S-41), this protein is N-acetylmuramic acid 6-phosphate etherase.